Reading from the N-terminus, the 55-residue chain is uncharacterized protein (55 aa).

This is an uncharacterized protein from Mycoplasma mycoides.